A 43-amino-acid polypeptide reads, in one-letter code: Cytochrome b559 subunit beta (43 aa).

The helical transmembrane segment at 18–34 (WLAVHTLAVPSVFFLGA) threads the bilayer. H22 contacts heme.

This sequence belongs to the PsbE/PsbF family. In terms of assembly, heterodimer of an alpha subunit and a beta subunit. PSII is composed of 1 copy each of membrane proteins PsbA, PsbB, PsbC, PsbD, PsbE, PsbF, PsbH, PsbI, PsbJ, PsbK, PsbL, PsbM, PsbT, PsbX, PsbY, PsbZ, Psb30/Ycf12, peripheral proteins PsbO, CyanoQ (PsbQ), PsbU, PsbV and a large number of cofactors. It forms dimeric complexes. It depends on heme b as a cofactor.

Its subcellular location is the cellular thylakoid membrane. This b-type cytochrome is tightly associated with the reaction center of photosystem II (PSII). PSII is a light-driven water:plastoquinone oxidoreductase that uses light energy to abstract electrons from H(2)O, generating O(2) and a proton gradient subsequently used for ATP formation. It consists of a core antenna complex that captures photons, and an electron transfer chain that converts photonic excitation into a charge separation. This chain is Cytochrome b559 subunit beta, found in Picosynechococcus sp. (strain ATCC 27264 / PCC 7002 / PR-6) (Agmenellum quadruplicatum).